Reading from the N-terminus, the 147-residue chain is Small ribosomal subunit protein bS6 (147 aa).

Residues 96–147 (VTEPSPMMKAKEERFTKRDDREERSDRSEAPRAEAPAKAEAPAKAEDEAAAE) are disordered. Residues 104 to 147 (KAKEERFTKRDDREERSDRSEAPRAEAPAKAEAPAKAEDEAAAE) are compositionally biased toward basic and acidic residues.

Belongs to the bacterial ribosomal protein bS6 family.

Functionally, binds together with bS18 to 16S ribosomal RNA. This chain is Small ribosomal subunit protein bS6, found in Photobacterium profundum (strain SS9).